The following is a 721-amino-acid chain: Polyribonucleotide nucleotidyltransferase (721 aa).

Mg(2+)-binding residues include aspartate 487 and aspartate 493. The region spanning 554–613 (PRIETFKIPTDKIREVIGTGGKVIREIVEKTGAKVNIDDDGTVKVASSDGESIKAAIKWI) is the KH domain. Residues 623-691 (NAIYDGTVVK…DRGKTRLSMK (69 aa)) form the S1 motif domain. The interval 697-721 (TGEDLEAKQKAEAEKAKAEGAPAAE) is disordered. The span at 701–714 (LEAKQKAEAEKAKA) shows a compositional bias: basic and acidic residues.

This sequence belongs to the polyribonucleotide nucleotidyltransferase family. The cofactor is Mg(2+).

Its subcellular location is the cytoplasm. The enzyme catalyses RNA(n+1) + phosphate = RNA(n) + a ribonucleoside 5'-diphosphate. In terms of biological role, involved in mRNA degradation. Catalyzes the phosphorolysis of single-stranded polyribonucleotides processively in the 3'- to 5'-direction. The sequence is that of Polyribonucleotide nucleotidyltransferase from Rhodopseudomonas palustris (strain BisA53).